Here is a 203-residue protein sequence, read N- to C-terminus: ATP-dependent Clp protease proteolytic subunit (203 aa).

Residue Ser-107 is the Nucleophile of the active site. His-132 is a catalytic residue.

The protein belongs to the peptidase S14 family. In terms of assembly, fourteen ClpP subunits assemble into 2 heptameric rings which stack back to back to give a disk-like structure with a central cavity, resembling the structure of eukaryotic proteasomes.

The protein resides in the cytoplasm. The enzyme catalyses Hydrolysis of proteins to small peptides in the presence of ATP and magnesium. alpha-casein is the usual test substrate. In the absence of ATP, only oligopeptides shorter than five residues are hydrolyzed (such as succinyl-Leu-Tyr-|-NHMec, and Leu-Tyr-Leu-|-Tyr-Trp, in which cleavage of the -Tyr-|-Leu- and -Tyr-|-Trp bonds also occurs).. In terms of biological role, cleaves peptides in various proteins in a process that requires ATP hydrolysis. Has a chymotrypsin-like activity. Plays a major role in the degradation of misfolded proteins. In Pelagibacter ubique (strain HTCC1062), this protein is ATP-dependent Clp protease proteolytic subunit.